Reading from the N-terminus, the 91-residue chain is Large ribosomal subunit protein bL31B (91 aa).

This sequence belongs to the bacterial ribosomal protein bL31 family. Type B subfamily. As to quaternary structure, part of the 50S ribosomal subunit.

In Neisseria gonorrhoeae (strain ATCC 700825 / FA 1090), this protein is Large ribosomal subunit protein bL31B.